Reading from the N-terminus, the 344-residue chain is Glycerol-3-phosphate dehydrogenase [NAD(P)+] (344 aa).

4 residues coordinate NADPH: serine 23, tryptophan 24, arginine 44, and lysine 118. Residues lysine 118, glycine 147, and threonine 149 each coordinate sn-glycerol 3-phosphate. Alanine 151 contributes to the NADPH binding site. Lysine 202, aspartate 255, serine 265, arginine 266, and asparagine 267 together coordinate sn-glycerol 3-phosphate. Lysine 202 acts as the Proton acceptor in catalysis. Arginine 266 contributes to the NADPH binding site. Glutamate 292 contacts NADPH.

Belongs to the NAD-dependent glycerol-3-phosphate dehydrogenase family.

The protein localises to the cytoplasm. The enzyme catalyses sn-glycerol 3-phosphate + NAD(+) = dihydroxyacetone phosphate + NADH + H(+). It carries out the reaction sn-glycerol 3-phosphate + NADP(+) = dihydroxyacetone phosphate + NADPH + H(+). Its pathway is membrane lipid metabolism; glycerophospholipid metabolism. Functionally, catalyzes the reduction of the glycolytic intermediate dihydroxyacetone phosphate (DHAP) to sn-glycerol 3-phosphate (G3P), the key precursor for phospholipid synthesis. The polypeptide is Glycerol-3-phosphate dehydrogenase [NAD(P)+] (Nitrosococcus oceani (strain ATCC 19707 / BCRC 17464 / JCM 30415 / NCIMB 11848 / C-107)).